The following is a 92-amino-acid chain: MTKRTKKVGITGKFGVRYGSSLRRQTKKLEVQQHAKYDCSFCGKRTVQRGATGIWNCKSCKKTVAGGAYTVSTAAAATVRSTIRRLRELAEA.

4 residues coordinate Zn(2+): Cys39, Cys42, Cys57, and Cys60.

The protein belongs to the eukaryotic ribosomal protein eL43 family. Component of the large ribosomal subunit. Mature ribosomes consist of a small (40S) and a large (60S) subunit. The 40S subunit contains 32 different proteins and 1 molecule of RNA (18S). The 60S subunit contains 45 different proteins and 3 molecules of RNA (25S, 5.8S and 5S). The cofactor is Zn(2+).

The protein localises to the cytoplasm. Component of the ribosome, a large ribonucleoprotein complex responsible for the synthesis of proteins in the cell. The small ribosomal subunit (SSU) binds messenger RNAs (mRNAs) and translates the encoded message by selecting cognate aminoacyl-transfer RNA (tRNA) molecules. The large subunit (LSU) contains the ribosomal catalytic site termed the peptidyl transferase center (PTC), which catalyzes the formation of peptide bonds, thereby polymerizing the amino acids delivered by tRNAs into a polypeptide chain. The nascent polypeptides leave the ribosome through a tunnel in the LSU and interact with protein factors that function in enzymatic processing, targeting, and the membrane insertion of nascent chains at the exit of the ribosomal tunnel. The protein is Large ribosomal subunit protein eL43 of Candida albicans (strain SC5314 / ATCC MYA-2876) (Yeast).